We begin with the raw amino-acid sequence, 167 residues long: ATP synthase subunit b (167 aa).

A helical membrane pass occupies residues 9-29; sequence ALPLGNMLFIIIAFLLLMLIL.

The protein belongs to the ATPase B chain family. As to quaternary structure, F-type ATPases have 2 components, F(1) - the catalytic core - and F(0) - the membrane proton channel. F(1) has five subunits: alpha(3), beta(3), gamma(1), delta(1), epsilon(1). F(0) has three main subunits: a(1), b(2) and c(10-14). The alpha and beta chains form an alternating ring which encloses part of the gamma chain. F(1) is attached to F(0) by a central stalk formed by the gamma and epsilon chains, while a peripheral stalk is formed by the delta and b chains.

It localises to the cell membrane. F(1)F(0) ATP synthase produces ATP from ADP in the presence of a proton or sodium gradient. F-type ATPases consist of two structural domains, F(1) containing the extramembraneous catalytic core and F(0) containing the membrane proton channel, linked together by a central stalk and a peripheral stalk. During catalysis, ATP synthesis in the catalytic domain of F(1) is coupled via a rotary mechanism of the central stalk subunits to proton translocation. In terms of biological role, component of the F(0) channel, it forms part of the peripheral stalk, linking F(1) to F(0). The chain is ATP synthase subunit b from Leuconostoc mesenteroides subsp. mesenteroides (strain ATCC 8293 / DSM 20343 / BCRC 11652 / CCM 1803 / JCM 6124 / NCDO 523 / NBRC 100496 / NCIMB 8023 / NCTC 12954 / NRRL B-1118 / 37Y).